The chain runs to 501 residues: MGYYAIFAVVLPFLWTCFYLLKLNPTSKLTSTIRLPPGPRPLPIIGNLHQLGERPHRTLANLAKVYGPIISLKFGSITTIAVSSADVAKEMFQKHDLALASRKVPAAVRANGHDNFSVAWLPVTPKWRFLRKISAIQLFSTQRLDARQSLRQAKVVELLDYIKARSNAGEPVDIGEAAFTTSLNLLSNTFFSMDLASYSSAASGEFKELVWKIMEEIGKPNLADCFPLVGFISRMSVNRELMGYGNKLNEVFAEIIEKRLSAANSSEGRGNGDVLDTLLRIMEEDDSELSLDDIMHLLMDFFTAGTDTTSSTLEWAMTELLHNPEKMAKAQAELEQVLGKDTVSIQESDIAKLLYLQATVKETLRMHPPTVFLLPRKADSDIDLYGHLVPKNAQVFVNLWAISYDPSTWENPDLFSPERFLDQDIDMKGQDFGFIPFGAGRRICPGLTLAYRMLNLMLGTLIHVFNWKLGDGLSREDLDMTDKFGITIQKAKPLRAIPILK.

A helical membrane pass occupies residues 1 to 21 (MGYYAIFAVVLPFLWTCFYLL). N-linked (GlcNAc...) asparagine glycans are attached at residues Asn115 and Asn264. Cys444 provides a ligand contact to heme.

This sequence belongs to the cytochrome P450 family. Heme is required as a cofactor. Highly expressed in aerial parts, in both skin and flesh tissues.

The protein resides in the membrane. It catalyses the reaction tyramine + reduced [NADPH--hemoprotein reductase] + O2 = dopamine + oxidized [NADPH--hemoprotein reductase] + H2O + H(+). The enzyme catalyses 3-methoxytyramine + reduced [NADPH--hemoprotein reductase] + O2 = 3,4-dihydroxy-5-methoxyphenethylamine + oxidized [NADPH--hemoprotein reductase] + H2O + H(+). It participates in aromatic compound metabolism. Its pathway is alkaloid biosynthesis. In terms of biological role, cytochrome P450 monooxygenase participating in the biosynthesis of natural products derived from phenylethylamine, including mescaline, a natural hallucinogen potentially used in psychotherapeutic treatments. Catalyzes the hydroxylation of tyramine to dopamine and of 3-methoxytyramine to 3,4-dihydroxy-5-methoxyphenethylamine. This Lophophora williamsii (Peyote) protein is Cytochrome P450 monooxygenase 76AD131.